The following is a 244-amino-acid chain: Purine nucleoside phosphorylase HI_0175 (244 aa).

Residues His70, Cys105, and His122 each contribute to the Zn(2+) site.

Belongs to the purine nucleoside phosphorylase YfiH/LACC1 family. Homodimer. Cu(2+) is required as a cofactor. Requires Zn(2+) as cofactor.

The catalysed reaction is adenosine + phosphate = alpha-D-ribose 1-phosphate + adenine. The enzyme catalyses S-methyl-5'-thioadenosine + phosphate = 5-(methylsulfanyl)-alpha-D-ribose 1-phosphate + adenine. It catalyses the reaction inosine + phosphate = alpha-D-ribose 1-phosphate + hypoxanthine. It carries out the reaction adenosine + H2O + H(+) = inosine + NH4(+). In terms of biological role, purine nucleoside enzyme that catalyzes the phosphorolysis of adenosine and inosine nucleosides, yielding D-ribose 1-phosphate and the respective free bases, adenine and hypoxanthine. Also catalyzes the phosphorolysis of S-methyl-5'-thioadenosine into adenine and S-methyl-5-thio-alpha-D-ribose 1-phosphate. Also has adenosine deaminase activity. In Haemophilus influenzae (strain ATCC 51907 / DSM 11121 / KW20 / Rd), this protein is Purine nucleoside phosphorylase HI_0175.